Here is an 843-residue protein sequence, read N- to C-terminus: Protein P (843 aa).

Residues 1–177 (MPLSYQHFRK…FCGSPYSWEQ (177 aa)) form a terminal protein domain (TP) region. The tract at residues 178-346 (DLQHGRLVFQ…YCLCHIVNLI (169 aa)) is spacer. Disordered stretches follow at residues 220 to 269 (KSRL…HNCA) and 291 to 316 (TSKG…RSRS). The segment at 347–690 (EDWGPCTEHG…YLNLYPVARQ (344 aa)) is polymerase/reverse transcriptase domain (RT). The Reverse transcriptase domain maps to 357–600 (EHRIRTPRTP…YSLNFMGYVI (244 aa)). Mg(2+) contacts are provided by Asp429, Asp551, and Asp552.

The protein belongs to the hepadnaviridae P protein family.

It catalyses the reaction DNA(n) + a 2'-deoxyribonucleoside 5'-triphosphate = DNA(n+1) + diphosphate. It carries out the reaction Endonucleolytic cleavage to 5'-phosphomonoester.. With respect to regulation, activated by host HSP70 and HSP40 in vitro to be able to bind the epsilon loop of the pgRNA. Because deletion of the RNase H region renders the protein partly chaperone-independent, the chaperones may be needed indirectly to relieve occlusion of the RNA-binding site by this domain. Inhibited by several reverse-transcriptase inhibitors: Lamivudine, Adefovir and Entecavir. Its function is as follows. Multifunctional enzyme that converts the viral RNA genome into dsDNA in viral cytoplasmic capsids. This enzyme displays a DNA polymerase activity that can copy either DNA or RNA templates, and a ribonuclease H (RNase H) activity that cleaves the RNA strand of RNA-DNA heteroduplexes in a partially processive 3'- to 5'-endonucleasic mode. Neo-synthesized pregenomic RNA (pgRNA) are encapsidated together with the P protein, and reverse-transcribed inside the nucleocapsid. Initiation of reverse-transcription occurs first by binding the epsilon loop on the pgRNA genome, and is initiated by protein priming, thereby the 5'-end of (-)DNA is covalently linked to P protein. Partial (+)DNA is synthesized from the (-)DNA template and generates the relaxed circular DNA (RC-DNA) genome. After budding and infection, the RC-DNA migrates in the nucleus, and is converted into a plasmid-like covalently closed circular DNA (cccDNA). The activity of P protein does not seem to be necessary for cccDNA generation, and is presumably released from (+)DNA by host nuclear DNA repair machinery. This Homo sapiens (Human) protein is Protein P.